Reading from the N-terminus, the 405-residue chain is MIQWFLKYRPRSLKDVENQDGAKKELQEWIESWLNGKPNAKAVLLHGPPGVGKTTLAEALAHDYNLELLEMNASDSRKLQDIKSVAEKASVYGSIFGTRGKLILLDEVDGINVREDTGAIQGILELIEKTKYPIIMTANDPWNPALRELRNKTKMVGLNKLGKYPLRRLLKKICQAEKIICDDEALNYIIDTSEGDARYAINMLQGIGEGYGKVTLDLVEAMARRKERELDPFETLRDIFWARYAWQAKNAATSAQIDYDMLIRWISENIPIQYDNIEDVWRAFDALSRASIFLKRAKGGDWDLLSYAYDLMSSGVAAAEIEKKKPNWKPKWKKYQFPSYIQLLSKSKDIRDTRDEIIKKLAIHSSFNKTLNDTYPFFLIFYKKYDKRLSLNTKEKEYLNSASKS.

47 to 54 (GPPGVGKT) provides a ligand contact to ATP.

This sequence belongs to the activator 1 small subunits family. RfcL subfamily. In terms of assembly, heteromultimer composed of small subunits (RfcS) and large subunits (RfcL).

Functionally, part of the RFC clamp loader complex which loads the PCNA sliding clamp onto DNA. The chain is Replication factor C large subunit from Saccharolobus islandicus (strain M.16.4 / Kamchatka #3) (Sulfolobus islandicus).